The chain runs to 54 residues: UPF0391 membrane protein BAV1230 (54 aa).

2 helical membrane passes run 5–25 (AAVF…GIAA) and 27–47 (AAGI…LSVL).

The protein belongs to the UPF0391 family.

The protein localises to the cell membrane. This Bordetella avium (strain 197N) protein is UPF0391 membrane protein BAV1230.